We begin with the raw amino-acid sequence, 519 residues long: Ion-translocating oxidoreductase complex subunit C (519 aa).

2 4Fe-4S ferredoxin-type domains span residues 372-401 (ETPE…FELN) and 411-440 (GAAK…VQSF). The [4Fe-4S] cluster site is built by C381, C384, C387, C391, C420, C423, C426, and C430. A disordered region spans residues 494–519 (KAEEAAAAAAMPPPATATAIQGEATP).

The protein belongs to the 4Fe4S bacterial-type ferredoxin family. RnfC subfamily. In terms of assembly, the complex is composed of six subunits: RnfA, RnfB, RnfC, RnfD, RnfE and RnfG. The cofactor is [4Fe-4S] cluster.

Its subcellular location is the cellular chromatophore membrane. In terms of biological role, part of a membrane-bound complex that couples electron transfer with translocation of ions across the membrane. Required for nitrogen fixation. Involved in electron transfer to nitrogenase. The polypeptide is Ion-translocating oxidoreductase complex subunit C (Rhodobacter capsulatus (Rhodopseudomonas capsulata)).